Here is a 720-residue protein sequence, read N- to C-terminus: ABC transporter G family member STR2 (720 aa).

The Cytoplasmic segment spans residues 1 to 467 (MRHANGRRGD…NFINIRRTPE (467 aa)). Positions 25 to 274 (LEFSNLTYTV…LGRMGRKVPK (250 aa)) constitute an ABC transporter domain. 70–77 (GPSGAGKS) is an ATP binding site. Residues 313–346 (GAHEMSIVPPSPAPSHREGRGHDRSNKRLHLKDQ) form a disordered region. Positions 327 to 346 (SHREGRGHDRSNKRLHLKDQ) are enriched in basic and acidic residues. A helical membrane pass occupies residues 468-488 (LFLSRLVVLTVMGIMMATMFM). At 489–502 (HPKKNLQGITNRLS) the chain is on the extracellular side. Residues 503–523 (FFIFTVCLFFFSSNDAVPAFI) traverse the membrane as a helical segment. Residues 524-547 (QERFIFVRETSHNKYRASSYTIAG) are Cytoplasmic-facing. A helical transmembrane segment spans residues 548–568 (LITYLPFLAVQAAVYAVIVWF). The Extracellular portion of the chain corresponds to 569-575 (ALSLRGP). A helical membrane pass occupies residues 576–596 (FIYFLIVLYMSLLSTNSFVVF). Residues 597-604 (VSSVVPNY) lie on the Cytoplasmic side of the membrane. The chain crosses the membrane as a helical span at residues 605-625 (ILGYAAVIAFTALFFLFCGYF). The Extracellular portion of the chain corresponds to 626–693 (LNSHDMPQYW…QVESKKWEKV (68 aa)). Asn-681 carries an N-linked (GlcNAc...) asparagine glycan. Residues 694–714 (YIMLAWAIVYRILFYIVLRFF) traverse the membrane as a helical segment. The Cytoplasmic segment spans residues 715 to 720 (SKNQRT).

Belongs to the ABC transporter superfamily. ABCG family. Stunted arbuscule (STR) subfamily. In terms of assembly, heterodimerizes with STR; the resulting transporter is located in the peri-arbuscular membrane.

The protein localises to the cell membrane. Its function is as follows. Together with STR, required for arbuscule development in arbuscular mycorrhizal (AM) symbiosis. The protein is ABC transporter G family member STR2 of Petunia hybrida (Petunia).